Consider the following 388-residue polypeptide: Flap endonuclease 1 (388 aa).

Residues 1–104 (MGILGLSKLI…GELAKRAERR (104 aa)) form an N-domain region. Residue aspartate 34 participates in Mg(2+) binding. Residues arginine 47 and arginine 70 each contribute to the DNA site. Mg(2+)-binding residues include aspartate 86, glutamate 158, glutamate 160, aspartate 179, and aspartate 181. Residues 122-253 (EIEKFNRRLV…KRAIELINNY (132 aa)) are I-domain. Residue glutamate 158 coordinates DNA. DNA is bound by residues glycine 231 and aspartate 233. Position 233 (aspartate 233) interacts with Mg(2+). The interaction with PCNA stretch occupies residues 336–344 (TQVRLDSFF). The tract at residues 343 to 388 (FFKTLPSTPSATNAAKRKAEEAKKSANNKKAKTSGGGGGGRGRRPK) is disordered.

The protein belongs to the XPG/RAD2 endonuclease family. FEN1 subfamily. In terms of assembly, interacts with PCNA. Three molecules of FEN1 bind to one PCNA trimer with each molecule binding to one PCNA monomer. PCNA stimulates the nuclease activity without altering cleavage specificity. Requires Mg(2+) as cofactor. Phosphorylated. Phosphorylation upon DNA damage induces relocalization to the nuclear plasma.

Its subcellular location is the nucleus. It localises to the nucleolus. The protein resides in the nucleoplasm. The protein localises to the mitochondrion. Structure-specific nuclease with 5'-flap endonuclease and 5'-3' exonuclease activities involved in DNA replication and repair. During DNA replication, cleaves the 5'-overhanging flap structure that is generated by displacement synthesis when DNA polymerase encounters the 5'-end of a downstream Okazaki fragment. It enters the flap from the 5'-end and then tracks to cleave the flap base, leaving a nick for ligation. Also involved in the long patch base excision repair (LP-BER) pathway, by cleaving within the apurinic/apyrimidinic (AP) site-terminated flap. Acts as a genome stabilization factor that prevents flaps from equilibrating into structures that lead to duplications and deletions. Also possesses 5'-3' exonuclease activity on nicked or gapped double-stranded DNA, and exhibits RNase H activity. Also involved in replication and repair of rDNA and in repairing mitochondrial DNA. This chain is Flap endonuclease 1, found in Drosophila ananassae (Fruit fly).